Reading from the N-terminus, the 264-residue chain is Major prion protein (264 aa).

A signal peptide spans 1 to 24 (MVKSHIGSWILVLFVAMWSDVGLC). An interaction with ADGRG6 region spans residues 25-41 (KKRPKPGGGWNTGGSRY). Positions 25 to 241 (KKRPKPGGGW…ESQAYYQRGA (217 aa)) are interaction with GRB2, ERI3 and SYN1. The interval 28-119 (PKPGGGWNTG…WNKPSKPKTN (92 aa)) is disordered. Repeat copies occupy residues 54–62 (PQGGGGWGQ), 63–70 (PHGGGWGQ), 71–78 (PHGGGWGQ), 79–86 (PHGGGWGQ), 87–94 (PHGGGWGQ), and 95–103 (PHGGGGWGQ). Positions 54-103 (PQGGGGWGQPHGGGWGQPHGGGWGQPHGGGWGQPHGGGWGQPHGGGGWGQ) are 6 X 8 AA tandem repeats of P-H-G-G-G-W-G-Q. Residues 55–107 (QGGGGWGQPHGGGWGQPHGGGWGQPHGGGWGQPHGGGWGQPHGGGGWGQGGTH) show a composition bias toward gly residues. Positions 72, 73, 74, 80, 81, 82, 88, 89, 90, 96, 98, and 99 each coordinate Cu(2+). A disulfide bridge links cysteine 190 with cysteine 225. 2 N-linked (GlcNAc...) asparagine glycosylation sites follow: asparagine 192 and asparagine 208. Alanine 241 carries the GPI-anchor amidated alanine lipid modification. A propeptide spans 242 to 264 (SVILFSSPPVILLISFLIFLIVG) (removed in mature form).

This sequence belongs to the prion family. In terms of assembly, monomer and homodimer. Has a tendency to aggregate into amyloid fibrils containing a cross-beta spine, formed by a steric zipper of superposed beta-strands. Soluble oligomers may represent an intermediate stage on the path to fibril formation. Copper binding may promote oligomerization. Interacts with GRB2, APP, ERI3/PRNPIP and SYN1. Mislocalized cytosolically exposed PrP interacts with MGRN1; this interaction alters MGRN1 subcellular location and causes lysosomal enlargement. Interacts with APP. Interacts with KIAA1191. Interacts with ADGRG6.

It localises to the cell membrane. Its subcellular location is the golgi apparatus. In terms of biological role, its primary physiological function is unclear. May play a role in neuronal development and synaptic plasticity. May be required for neuronal myelin sheath maintenance. May promote myelin homeostasis through acting as an agonist for ADGRG6 receptor. May play a role in iron uptake and iron homeostasis. Soluble oligomers are toxic to cultured neuroblastoma cells and induce apoptosis (in vitro). Association with GPC1 (via its heparan sulfate chains) targets PRNP to lipid rafts. Also provides Cu(2+) or Zn(2+) for the ascorbate-mediated GPC1 deaminase degradation of its heparan sulfate side chains. The polypeptide is Major prion protein (PRNP) (Bos indicus x Bos taurus (Hybrid cattle)).